The following is a 214-amino-acid chain: Ribosomal RNA small subunit methyltransferase G (214 aa).

S-adenosyl-L-methionine is bound by residues Gly77, Leu82, Val128–Glu129, and Arg143.

It belongs to the methyltransferase superfamily. RNA methyltransferase RsmG family.

The protein resides in the cytoplasm. The catalysed reaction is guanosine(527) in 16S rRNA + S-adenosyl-L-methionine = N(7)-methylguanosine(527) in 16S rRNA + S-adenosyl-L-homocysteine. In terms of biological role, specifically methylates the N7 position of guanine in position 527 of 16S rRNA. The polypeptide is Ribosomal RNA small subunit methyltransferase G (Nitrosococcus oceani (strain ATCC 19707 / BCRC 17464 / JCM 30415 / NCIMB 11848 / C-107)).